The following is a 370-amino-acid chain: D-alanine--D-alanine ligase (370 aa).

Residues 144–352 form the ATP-grasp domain; sequence KKIFADAGIP…YGALIERLVD (209 aa). 177 to 232 contributes to the ATP binding site; it reads EEVLTYPVFVKPANLGSSVGISKATNKKELADAMTEAFLYDRRVVVEQGVVAREIE. Mg(2+) contacts are provided by D306, E319, and N321.

This sequence belongs to the D-alanine--D-alanine ligase family. Requires Mg(2+) as cofactor. Mn(2+) serves as cofactor.

It is found in the cytoplasm. The catalysed reaction is 2 D-alanine + ATP = D-alanyl-D-alanine + ADP + phosphate + H(+). It functions in the pathway cell wall biogenesis; peptidoglycan biosynthesis. Functionally, cell wall formation. This Listeria monocytogenes serotype 4b (strain F2365) protein is D-alanine--D-alanine ligase.